A 628-amino-acid polypeptide reads, in one-letter code: Alpha-L-arabinofuranosidase A (628 aa).

An N-terminal signal peptide occupies residues 1-25 (MVAFSALSGVSALSLLLCLVQHAHG). N-linked (GlcNAc...) asparagine glycans are attached at residues Asn36, Asn51, Asn74, Asn152, Asn171, Asn260, Asn359, and Asn493.

Belongs to the glycosyl hydrolase 51 family.

The protein resides in the secreted. The enzyme catalyses Hydrolysis of terminal non-reducing alpha-L-arabinofuranoside residues in alpha-L-arabinosides.. The protein operates within glycan metabolism; L-arabinan degradation. Alpha-L-arabinofuranosidase involved in the degradation of arabinoxylan, a major component of plant hemicellulose. Acts only on small linear 1,5-alpha-linked L-arabinofuranosyl oligosaccharides. The sequence is that of Alpha-L-arabinofuranosidase A (abfA) from Aspergillus kawachii (strain NBRC 4308) (White koji mold).